The primary structure comprises 366 residues: Tetraacyldisaccharide 4'-kinase (366 aa).

Residue 62–69 (RVGGTGKT) participates in ATP binding.

It belongs to the LpxK family.

The enzyme catalyses a lipid A disaccharide + ATP = a lipid IVA + ADP + H(+). It participates in glycolipid biosynthesis; lipid IV(A) biosynthesis; lipid IV(A) from (3R)-3-hydroxytetradecanoyl-[acyl-carrier-protein] and UDP-N-acetyl-alpha-D-glucosamine: step 6/6. Transfers the gamma-phosphate of ATP to the 4'-position of a tetraacyldisaccharide 1-phosphate intermediate (termed DS-1-P) to form tetraacyldisaccharide 1,4'-bis-phosphate (lipid IVA). This chain is Tetraacyldisaccharide 4'-kinase, found in Polynucleobacter necessarius subsp. necessarius (strain STIR1).